A 562-amino-acid chain; its full sequence is Exonuclease subunit 2 (562 aa).

36–43 serves as a coordination point for ATP; sequence GKNGGGKS.

It to phage T5 protein D13 and to yeast RAD52. As to quaternary structure, consists of two subunits: Gp47 and Gp46.

Its function is as follows. Exonuclease involved in phage DNA recombination, replication, and repair. The chain is Exonuclease subunit 2 (46) from Escherichia phage RB69 (Bacteriophage RB69).